Consider the following 362-residue polypeptide: Cobalt-precorrin-5B C(1)-methyltransferase (362 aa).

The protein belongs to the CbiD family.

The enzyme catalyses Co-precorrin-5B + S-adenosyl-L-methionine = Co-precorrin-6A + S-adenosyl-L-homocysteine. It participates in cofactor biosynthesis; adenosylcobalamin biosynthesis; cob(II)yrinate a,c-diamide from sirohydrochlorin (anaerobic route): step 6/10. In terms of biological role, catalyzes the methylation of C-1 in cobalt-precorrin-5B to form cobalt-precorrin-6A. In Burkholderia cenocepacia (strain HI2424), this protein is Cobalt-precorrin-5B C(1)-methyltransferase.